A 266-amino-acid chain; its full sequence is Ribonuclease HII (266 aa).

One can recognise an RNase H type-2 domain in the interval 73-266 (SPVAGVDEAG…NCGSRQKCEG (194 aa)). Positions 79, 80, and 173 each coordinate a divalent metal cation.

The protein belongs to the RNase HII family. It depends on Mn(2+) as a cofactor. The cofactor is Mg(2+).

Its subcellular location is the cytoplasm. The enzyme catalyses Endonucleolytic cleavage to 5'-phosphomonoester.. Endonuclease that specifically degrades the RNA of RNA-DNA hybrids. The protein is Ribonuclease HII of Pelotomaculum thermopropionicum (strain DSM 13744 / JCM 10971 / SI).